A 223-amino-acid polypeptide reads, in one-letter code: Adenylate kinase (223 aa).

10-15 (GSGKGT) is a binding site for ATP. The NMP stretch occupies residues 30–59 (ESGAIFRKHIGGGTELGMKAKEYIDKGELV). Residues serine 31, arginine 36, 57 to 59 (ELV), 84 to 87 (GFPR), and glutamine 91 contribute to the AMP site. The interval 125–164 (GRRLCENDPNHPNNKFIDAIKPDGDKCRVCGGALSERADD) is LID. Arginine 126 contributes to the ATP binding site. Arginine 161 and arginine 173 together coordinate AMP. Glycine 209 contacts ATP.

This sequence belongs to the adenylate kinase family. In terms of assembly, monomer.

Its subcellular location is the cytoplasm. The enzyme catalyses AMP + ATP = 2 ADP. Its pathway is purine metabolism; AMP biosynthesis via salvage pathway; AMP from ADP: step 1/1. In terms of biological role, catalyzes the reversible transfer of the terminal phosphate group between ATP and AMP. Plays an important role in cellular energy homeostasis and in adenine nucleotide metabolism. In Maridesulfovibrio salexigens (strain ATCC 14822 / DSM 2638 / NCIMB 8403 / VKM B-1763) (Desulfovibrio salexigens), this protein is Adenylate kinase.